Consider the following 892-residue polypeptide: Alanine--tRNA ligase (892 aa).

4 residues coordinate Zn(2+): His577, His581, Cys680, and His684.

Belongs to the class-II aminoacyl-tRNA synthetase family. The cofactor is Zn(2+).

The protein localises to the cytoplasm. It catalyses the reaction tRNA(Ala) + L-alanine + ATP = L-alanyl-tRNA(Ala) + AMP + diphosphate. In terms of biological role, catalyzes the attachment of alanine to tRNA(Ala) in a two-step reaction: alanine is first activated by ATP to form Ala-AMP and then transferred to the acceptor end of tRNA(Ala). Also edits incorrectly charged Ser-tRNA(Ala) and Gly-tRNA(Ala) via its editing domain. This is Alanine--tRNA ligase from Arthrobacter sp. (strain FB24).